We begin with the raw amino-acid sequence, 838 residues long: DNA gyrase subunit A (838 aa).

Residues 41–510 (LPEVRDGLKP…ADGDVSDEDL (470 aa)) enclose the Topo IIA-type catalytic domain. Tyr129 (O-(5'-phospho-DNA)-tyrosine intermediate) is an active-site residue. The GyrA-box signature appears at 537–543 (QKRGGKG).

Belongs to the type II topoisomerase GyrA/ParC subunit family. In terms of assembly, heterotetramer, composed of two GyrA and two GyrB chains. In the heterotetramer, GyrA contains the active site tyrosine that forms a transient covalent intermediate with DNA, while GyrB binds cofactors and catalyzes ATP hydrolysis.

The protein localises to the cytoplasm. The enzyme catalyses ATP-dependent breakage, passage and rejoining of double-stranded DNA.. A type II topoisomerase that negatively supercoils closed circular double-stranded (ds) DNA in an ATP-dependent manner to modulate DNA topology and maintain chromosomes in an underwound state. Negative supercoiling favors strand separation, and DNA replication, transcription, recombination and repair, all of which involve strand separation. Also able to catalyze the interconversion of other topological isomers of dsDNA rings, including catenanes and knotted rings. Type II topoisomerases break and join 2 DNA strands simultaneously in an ATP-dependent manner. The chain is DNA gyrase subunit A from Mycobacterium tuberculosis (strain CDC 1551 / Oshkosh).